The sequence spans 214 residues: Ribonuclease HII (214 aa).

Positions 26-214 constitute an RNase H type-2 domain; sequence EIVCGVDEAG…PVREAFDLIR (189 aa). A divalent metal cation contacts are provided by Asp32, Glu33, and Asp124.

It belongs to the RNase HII family. Mn(2+) is required as a cofactor. Mg(2+) serves as cofactor.

The protein resides in the cytoplasm. It catalyses the reaction Endonucleolytic cleavage to 5'-phosphomonoester.. Functionally, endonuclease that specifically degrades the RNA of RNA-DNA hybrids. The protein is Ribonuclease HII of Burkholderia thailandensis (strain ATCC 700388 / DSM 13276 / CCUG 48851 / CIP 106301 / E264).